Consider the following 288-residue polypeptide: ATP synthase gamma chain (288 aa).

It belongs to the ATPase gamma chain family. In terms of assembly, F-type ATPases have 2 components, CF(1) - the catalytic core - and CF(0) - the membrane proton channel. CF(1) has five subunits: alpha(3), beta(3), gamma(1), delta(1), epsilon(1). CF(0) has three main subunits: a, b and c.

The protein localises to the cell inner membrane. In terms of biological role, produces ATP from ADP in the presence of a proton gradient across the membrane. The gamma chain is believed to be important in regulating ATPase activity and the flow of protons through the CF(0) complex. This Aliivibrio salmonicida (strain LFI1238) (Vibrio salmonicida (strain LFI1238)) protein is ATP synthase gamma chain.